The primary structure comprises 464 residues: Gamma-aminobutyric acid receptor subunit rho-3 (464 aa).

Residues 1-15 (MVLAFWLAFFTYTWI) form the signal peptide. Residues 16-263 (TLMLDASAVK…LFINFVLRRH (248 aa)) lie on the Extracellular side of the membrane. Residue Arg-108 coordinates 4-aminobutanoate. N-linked (GlcNAc...) asparagine glycosylation occurs at Asn-123. 4-aminobutanoate is bound at residue Ser-172. A disulfide bond links Cys-181 and Cys-195. Residue Asn-194 is glycosylated (N-linked (GlcNAc...) asparagine). Position 200 (Glu-200) interacts with 4-aminobutanoate. A helical membrane pass occupies residues 264-284 (IFFFVLQTYFPAMLMVMLSWV). Residues 285–296 (SFWIDRRAVPAR) are Cytoplasmic-facing. The helical transmembrane segment at 297–317 (VSLGITTVLTMSTIVTGVSAS) threads the bilayer. Residues 318 to 328 (MPQVSYVKAVD) lie on the Extracellular side of the membrane. Residues 329 to 349 (VYMWVSSLFVFLSVIEYAAVN) traverse the membrane as a helical segment. The interval 344-445 (EYAAVNYLTT…NNHVIDTYSR (102 aa)) is interaction with SQSTM1. The Cytoplasmic segment spans residues 350 to 443 (YLTTVEEWKQ…LENNHVIDTY (94 aa)). Residues 444–464 (SRIVFPVVYIIFNLFYWGIYV) form a helical membrane-spanning segment.

It belongs to the ligand-gated ion channel (TC 1.A.9) family. Gamma-aminobutyric acid receptor (TC 1.A.9.5) subfamily. GABRR3 sub-subfamily. Three rho subunits (rho-1/GBRR1, rho-2/GBRR2 and rho-3/GBRR3) coassemble either to form functional homopentamers or heteropentamers. Forms a ternary complex with SQSTM1 and PRKCZ. As to expression, expressed in retina.

It localises to the postsynaptic cell membrane. Its subcellular location is the cell membrane. It catalyses the reaction chloride(in) = chloride(out). Its activity is regulated as follows. Activated by agonists in the following the potency order: muscimol &gt; TACP &gt; TACA &gt; thiomuscimol &gt; CAMP &gt; CACA, when forming a homopentamer. Inhibited by TPMPA, a rho-specific antagonist, when forming a homopentamer. Inhibited antagonists in the following the potency order: TAMP = TPMPA &gt; P4MPA = THIP &gt; 14AA &gt; 3-APA, when forming a homopentamer. In terms of biological role, rho subunit of the pentameric ligand-gated chloride channels responsible for mediating the effects of gamma-aminobutyric acid (GABA), the major inhibitory neurotransmitter in the brain. Rho-containing GABA-gated chloride channels are a subclass of GABA(A) receptors (GABAARs) entirely composed of rho subunits, where GABA molecules bind at the rho intersubunit interfaces. When activated by GABA, rho-GABAARs selectively allow the flow of chloride anions across the cell membrane down their electrochemical gradient. This Rattus norvegicus (Rat) protein is Gamma-aminobutyric acid receptor subunit rho-3.